The following is a 635-amino-acid chain: MSGAIGGAEVHGFRGAAAQLPRSRVLGRPIRVAPPAAARPGGASAGSIRAVSAPAKKDASEVKRSKVEIIKEKSNFLRYPLNEELVSEAPNINESAVQLIKFHGSYQQTDRDVRGQKNYSFMLRTKNPCGKVPNQLYLAMDTLADEFGIGTLRLTTRQTFQLHGVLKKNLKTVLSTVIKNMGSTLGACGDLNRNVLAPAAPYVKKDILFAQQTAENIAALLTPQSGAYYDLWVDGEKIMSAEEPPEVTKARNDNSHGTNFPDSPEPIYGTQYLPRKFKVAVTAAGDNSVDILTNDIGVVVVSDDAGEPIGFNIYVGGGMGRTHRVETTFPRLADPLGYVPKEDILYAIKAIVVTQRENGRRDDRKYSRMKYMIDRWGIDRFRAEVEKYYGKKFESFRPLPEWQFNSYLGWQEQGDGKLFYGVHVDNGRVGGQAKKTLREIIEKYNLDVSITPNQNLILCGIDQAWREPITTALAQAGLLEPKDVDPLNLTAMACPALPLCPLAQTEAERGILPILKRIRAVFNKVGIKDSESVVVRITGCPNGCARPYMAELGFVGDGPKSYQIWLGGTPNQSTLAESFMDKVKLDDIEKVLEPLFTYWNGTRQEGESFGSFTNRTGFDKLKEVVNKWAESPSAA.

Residues 1–50 constitute a chloroplast transit peptide; sequence MSGAIGGAEVHGFRGAAAQLPRSRVLGRPIRVAPPAAARPGGASAGSIRA. Disordered regions lie at residues 31–50 and 245–267; these read RVAP…SIRA and PEVT…PEPI. Basic and acidic residues predominate over residues 245-254; it reads PEVTKARNDN. Residues Cys-494, Cys-500, Cys-540, and Cys-544 each coordinate [4Fe-4S] cluster. Position 544 (Cys-544) interacts with siroheme.

Belongs to the nitrite and sulfite reductase 4Fe-4S domain family. Monomer. Interacts with ferredoxin. It depends on siroheme as a cofactor. Requires [4Fe-4S] cluster as cofactor. Post-translationally, phosphorylated; this phosphorylation reduces DNA-binding. In terms of tissue distribution, present in roots and leaves (at protein level). In leaves, sulfite reductase activity is detected in both bundle sheath and mesophyll cell types.

It is found in the plastid. Its subcellular location is the chloroplast stroma. The protein localises to the chloroplast nucleoid. It localises to the plastid stroma. It catalyses the reaction hydrogen sulfide + 6 oxidized [2Fe-2S]-[ferredoxin] + 3 H2O = sulfite + 6 reduced [2Fe-2S]-[ferredoxin] + 7 H(+). Its activity is regulated as follows. Inhibited by the tryptophan-modifying reagent, N-bromosuccinimide (NBS), by the lysine-modifying reagent, N-acetylsuccinimide and by the arginine-modifying reagent, phenylglyoxal. Complex formation with ferredoxin prevents these inhibitions. Its function is as follows. Essential protein with sulfite reductase activity required in assimilatory sulfate reduction pathway during both primary and secondary metabolism and thus involved in development and growth. In terms of biological role, DNA-binding protein that binds to both double-stranded and single-stranded DNA without significant sequence specificity to reversibly repress the transcriptional activity of chloroplast nucleoids by promoting DNA compaction and possibly regulate DNA replication. The sequence is that of Sulfite reductase [ferredoxin], chloroplastic (SIR) from Zea mays (Maize).